Here is a 500-residue protein sequence, read N- to C-terminus: Lysine--tRNA ligase (500 aa).

Mg(2+)-binding residues include glutamate 410 and glutamate 417.

It belongs to the class-II aminoacyl-tRNA synthetase family. As to quaternary structure, homodimer. The cofactor is Mg(2+).

Its subcellular location is the cytoplasm. The catalysed reaction is tRNA(Lys) + L-lysine + ATP = L-lysyl-tRNA(Lys) + AMP + diphosphate. This is Lysine--tRNA ligase from Pseudomonas putida (strain ATCC 47054 / DSM 6125 / CFBP 8728 / NCIMB 11950 / KT2440).